The primary structure comprises 150 residues: uncharacterized protein (150 aa).

The Flavodoxin-like domain maps to 4-148; that stretch reads LILYKSIHHK…KAKEFAKSIL (145 aa).

This is an uncharacterized protein from Methanocaldococcus jannaschii (strain ATCC 43067 / DSM 2661 / JAL-1 / JCM 10045 / NBRC 100440) (Methanococcus jannaschii).